The sequence spans 289 residues: MSAKARGYVALMKLRVVELLLITTVPVMMLAERGVPSLRLIAVTLVAGTLAAGSANTINCYVDRDIDQMMGRTKRRPLVRATVTPTEALTFGIVIGIVSTLLFGFLVNWPSALLADGAIAFYVFVYTLGLKRRTPSNIVIGGAAGCFPVLIGWSAVTGTVGWAAVLLFAVVFFWTPPHFWALAMKFRDDYAAAGVPMLPVVASVQVVTRRMLGYAYAMVAASLAVAPVASTGPVYLVAAVAVGAWFLVESHRVARRARHGEDPRPMRLFHMSITYLTLLFVAIAVTALV.

Helical transmembrane passes span 9–29, 40–60, 89–109, 110–130, 134–154, 155–175, 190–209, 228–248, and 269–289; these read VALM…PVMM, LIAV…TINC, LTFG…LVNW, PSAL…TLGL, TPSN…IGWS, AVTG…FFWT, YAAA…VVTR, VAST…WFLV, and FHMS…TALV.

This sequence belongs to the UbiA prenyltransferase family. Protoheme IX farnesyltransferase subfamily.

The protein localises to the cell membrane. It carries out the reaction heme b + (2E,6E)-farnesyl diphosphate + H2O = Fe(II)-heme o + diphosphate. The protein operates within porphyrin-containing compound metabolism; heme O biosynthesis; heme O from protoheme: step 1/1. In terms of biological role, converts heme B (protoheme IX) to heme O by substitution of the vinyl group on carbon 2 of heme B porphyrin ring with a hydroxyethyl farnesyl side group. The chain is Protoheme IX farnesyltransferase from Frankia casuarinae (strain DSM 45818 / CECT 9043 / HFP020203 / CcI3).